A 509-amino-acid chain; its full sequence is 2,3-bisphosphoglycerate-independent phosphoglycerate mutase (509 aa).

Asp-11 serves as a coordination point for Mn(2+). Tyr-35 bears the Phosphotyrosine mark. A Mn(2+)-binding site is contributed by Ser-61. Ser-61 functions as the Phosphoserine intermediate in the catalytic mechanism. Substrate-binding positions include His-122, 152–153, Arg-184, Arg-190, 260–263, and Lys-335; these read RD and RPDR. Mn(2+) is bound by residues Asp-402, His-406, Asp-443, His-444, and His-461.

Belongs to the BPG-independent phosphoglycerate mutase family. In terms of assembly, monomer. The cofactor is Mn(2+).

It carries out the reaction (2R)-2-phosphoglycerate = (2R)-3-phosphoglycerate. It functions in the pathway carbohydrate degradation; glycolysis; pyruvate from D-glyceraldehyde 3-phosphate: step 3/5. Functionally, essential for rapid growth and for sporulation. Catalyzes the interconversion of 2-phosphoglycerate and 3-phosphoglycerate. The protein is 2,3-bisphosphoglycerate-independent phosphoglycerate mutase of Bacillus cereus (strain ATCC 10987 / NRS 248).